A 692-amino-acid chain; its full sequence is MAREFSLEKTRNIGIMAHIDAGKTTTTERILFYTGRIHKIGETHEGASQMDWMEQEQERGITITSAATTAQWKGYRVNIIDTPGHVDFTVEVERSLRVLDGAVAVLDAQSGVEPQTETVWRQATTYGVPRIVFVNKMDKIGADFLYSVGTLRDRLQANAHAIQLPIGAEDNFEGIIDLVENVAYFYEDDLGTRSDAKEIPEEYKEQAEELRNSLIEAVCELDEELMDKYLEGEEITIDELKAGIRKGTLNVEFYPVLVGSAFKNKGVQLVLDAVLDYLPAPTDVAAIKGTRPDTNEEIERHSSDEEPFSALAFKVMTDPYVGKLTFFRVYSGTLDSGSYVKNSTKGKRERVGRILQMHANSREEISTVYAGDIAAAVGLKDTTTGDTLCDEKDLVILESMEFPEPVIDVAIEPKSKADQDKMGIALAKLAEEDPTFRTQTNPETGQTIISGMGELHLDIIVDRMKREFKVEANVGAPQVAYRETFRTGAKVEGKFVRQSGGRGQFGHVWIEFEPNEEGAGFEFENAIVGGVVPREYIPAVQAGLEDALENGVLAGFPLIDIKAKLFDGSYHDVDSNEMAFKVAASMALKNAVSKCNPVLLEPIMKVEVVIPEEYMGDIMGDITSRRGRVEGMEARGNAQVVRAMVPLAEMFGYATALRSNTQGRGTFTMHMDHYEEVPKSVAEEIIKKNKGE.

Residues 8–282 enclose the tr-type G domain; the sequence is EKTRNIGIMA…AVLDYLPAPT (275 aa). GTP-binding positions include 17–24, 81–85, and 135–138; these read AHIDAGKT, DTPGH, and NKMD. Phosphoserine occurs at positions 213, 302, 569, and 680.

This sequence belongs to the TRAFAC class translation factor GTPase superfamily. Classic translation factor GTPase family. EF-G/EF-2 subfamily. Phosphorylated on threonine residue(s). Phosphorylated by PrkC and dephosphorylated by PrpC, in vitro.

The protein resides in the cytoplasm. Catalyzes the GTP-dependent ribosomal translocation step during translation elongation. During this step, the ribosome changes from the pre-translocational (PRE) to the post-translocational (POST) state as the newly formed A-site-bound peptidyl-tRNA and P-site-bound deacylated tRNA move to the P and E sites, respectively. Catalyzes the coordinated movement of the two tRNA molecules, the mRNA and conformational changes in the ribosome. This chain is Elongation factor G (fusA), found in Bacillus subtilis (strain 168).